A 1483-amino-acid polypeptide reads, in one-letter code: Tyrosine-protein kinase BAZ1B (1483 aa).

A WAC domain is found at 20–126 (EPLFTIPHTQ…GEECDFEVGK (107 aa)). Residues 145–212 (EEATEKKSDG…TSLKKGERKW (68 aa)) are disordered. Composition is skewed to basic and acidic residues over residues 148-165 (TEKK…DKEN) and 172-195 (DHQK…DRAR). S152, S158, and S161 each carry phosphoserine. The short motif at 207 to 213 (KGERKWA) is the C motif element. Phosphothreonine is present on T266. The segment at 302-333 (NPSTKRKNTGSPDRKPSKKSKTDNSSLSSPLN) is disordered. Phosphoserine occurs at positions 330, 345, 347, 349, 361, and 374. 2 disordered regions span residues 379-432 (HTNF…KTPK) and 446-470 (GTQK…PHKH). Basic residues-rich tracts occupy residues 384–395 (IPKKGPPAKKPG) and 423–432 (SPKKGLKTPK). Residues 533 to 586 (KRWASMSEEQRKEYLKKKREELKKKLKEKAKERREKEMLERLEKQKRYEDQELT) are a coiled coil. The DDT domain maps to 604-668 (NTLFGDVAMV…LQTLLQDEIA (65 aa)). Phosphoserine is present on residues S699, S705, S708, and S716. Positions 768 to 814 (TRQQMSAELWKERLAVLKEENDKKRAEKQKRKEMEAKNKENGKVENG) form a coiled coil. Residues 788–810 (NDKKRAEKQKRKEMEAKNKENGK) show a composition bias toward basic and acidic residues. Residues 788–817 (NDKKRAEKQKRKEMEAKNKENGKVENGLGK) form a disordered region. Residue K826 forms a Glycyl lysine isopeptide (Lys-Gly) (interchain with G-Cter in SUMO1); alternate linkage. Residue K826 forms a Glycyl lysine isopeptide (Lys-Gly) (interchain with G-Cter in SUMO2); alternate linkage. Residues 850 to 893 (IQAKKEREIQEREMKVKLERQAEEERIRKHKAAAEKAFQEGIAK) adopt a coiled-coil conformation. K853 is covalently cross-linked (Glycyl lysine isopeptide (Lys-Gly) (interchain with G-Cter in SUMO2)). The residue at position 947 (S947) is a Phosphoserine. Residues K1043, K1089, and K1107 each participate in a glycyl lysine isopeptide (Lys-Gly) (interchain with G-Cter in SUMO2) cross-link. A PHD-type zinc finger spans residues 1184 to 1234 (NARCKVCRKKGEDDKLILCDECNKAFHLFCLRPALYEVPDGEWQCPACQPA). Residues 1237-1326 (RRNSRGRNYT…PKAPPVDDAE (90 aa)) are disordered. Positions 1245 to 1283 (YTEESASEDSEDDESDEEEEEEEEEEEEEDYEVAGLRLR) form a coiled coil. Residues 1249-1276 (SASEDSEDDESDEEEEEEEEEEEEEDYE) are compositionally biased toward acidic residues. Basic residues-rich tracts occupy residues 1282–1292 (LRPRKTIRGKH) and 1301–1316 (SGRR…RRSQ). S1315 bears the Phosphoserine mark. Residue K1335 is modified to N6-acetyllysine. The Bromo domain occupies 1339–1443 (RRQSLELQKC…QCLVALLHKH (105 aa)). Phosphoserine is present on residues S1342 and S1468. The disordered stretch occupies residues 1455–1483 (KKFPDRLAEDEGDSEPEAVGQSRGRRQKK).

The protein belongs to the WAL family. BAZ1B subfamily. Component of the WICH-1 ISWI chromatin remodeling complex, at least composed of SMARCA1 and BAZ1B/WSTF, which regulates the spacing of histone octamers on the DNA template to facilitate access to DNA. Within the WICH-1 ISWI chromatin remodeling complex interacts with SMARCA1; the interaction is direct. Component of the WICH-5 ISWI chromatin remodeling complex (also called the WICH complex), at least composed of SMARCA5/SNF2H and BAZ1B/WSTF, which regulates the spacing of histone octamers on the DNA template to facilitate access to DNA. Within the WICH-5 ISWI chromatin remodeling complex interacts with SMARCA5/SNF2H; the interaction is direct. Component of the B-WICH chromatin remodeling complex, at least composed of SMARCA5/SNF2H, BAZ1B/WSTF, SF3B1, DEK, MYO1C, ERCC6, MYBBP1A and DDX21. Within the B-WICH chromatin remodeling complex, interacts with SMARCA5/SNF2H, DDX21, DEK, MYBBP1A, SF3B1, ERCC6 and MYO1C. Interacts with PCNA; the interaction is direct and is required for BAZ1B/WSTF binding to replication foci during S phase. Interacts with CDT1. The cofactor is Mn(2+). As to expression, ubiquitously expressed with high levels of expression in heart, brain, placenta, skeletal muscle and ovary.

The protein localises to the nucleus. It catalyses the reaction L-tyrosyl-[protein] + ATP = O-phospho-L-tyrosyl-[protein] + ADP + H(+). Functionally, atypical tyrosine-protein kinase that plays a central role in chromatin remodeling and acts as a transcription regulator. Involved in DNA damage response by phosphorylating 'Tyr-142' of histone H2AX (H2AXY142ph). H2AXY142ph plays a central role in DNA repair and acts as a mark that distinguishes between apoptotic and repair responses to genotoxic stress. Regulatory subunit of the ATP-dependent WICH-1 and WICH-5 ISWI chromatin remodeling complexes, which form ordered nucleosome arrays on chromatin and facilitate access to DNA during DNA-templated processes such as DNA replication, transcription, and repair. Both complexes regulate the spacing of nucleosomes along the chromatin and have the ability to slide mononucleosomes to the center of a DNA template. The WICH-1 ISWI chromatin remodeling complex has a lower ATP hydrolysis rate than the WICH-5 ISWI chromatin remodeling complex. The WICH-5 ISWI chromatin-remodeling complex regulates the transcription of various genes, has a role in RNA polymerase I transcription. Within the B-WICH complex has a role in RNA polymerase III transcription. Mediates the recruitment of the WICH-5 ISWI chromatin remodeling complex to replication foci during DNA replication. This is Tyrosine-protein kinase BAZ1B (BAZ1B) from Homo sapiens (Human).